The primary structure comprises 219 residues: 2-hydroxy-3-keto-5-methylthiopentenyl-1-phosphate phosphatase (219 aa).

It belongs to the HAD-like hydrolase superfamily. MtnX family.

It catalyses the reaction 2-hydroxy-5-methylsulfanyl-3-oxopent-1-enyl phosphate + H2O = 1,2-dihydroxy-5-(methylsulfanyl)pent-1-en-3-one + phosphate. Its pathway is amino-acid biosynthesis; L-methionine biosynthesis via salvage pathway; L-methionine from S-methyl-5-thio-alpha-D-ribose 1-phosphate: step 4/6. Functionally, dephosphorylates 2-hydroxy-3-keto-5-methylthiopentenyl-1-phosphate (HK-MTPenyl-1-P) yielding 1,2-dihydroxy-3-keto-5-methylthiopentene (DHK-MTPene). The polypeptide is 2-hydroxy-3-keto-5-methylthiopentenyl-1-phosphate phosphatase (Bacillus mycoides (strain KBAB4) (Bacillus weihenstephanensis)).